Consider the following 378-residue polypeptide: Erythronate-4-phosphate dehydrogenase (378 aa).

The substrate site is built by Ser45 and Thr66. Residues Asp146 and Thr175 each contribute to the NAD(+) site. Arg208 is an active-site residue. Asp232 contributes to the NAD(+) binding site. Glu237 is an active-site residue. His254 serves as the catalytic Proton donor. Gly257 contributes to the NAD(+) binding site. Residue Tyr258 participates in substrate binding.

It belongs to the D-isomer specific 2-hydroxyacid dehydrogenase family. PdxB subfamily. Homodimer.

The protein resides in the cytoplasm. It catalyses the reaction 4-phospho-D-erythronate + NAD(+) = (R)-3-hydroxy-2-oxo-4-phosphooxybutanoate + NADH + H(+). It participates in cofactor biosynthesis; pyridoxine 5'-phosphate biosynthesis; pyridoxine 5'-phosphate from D-erythrose 4-phosphate: step 2/5. Functionally, catalyzes the oxidation of erythronate-4-phosphate to 3-hydroxy-2-oxo-4-phosphonooxybutanoate. The chain is Erythronate-4-phosphate dehydrogenase from Escherichia coli O6:H1 (strain CFT073 / ATCC 700928 / UPEC).